Consider the following 491-residue polypeptide: Glycogen synthase (491 aa).

Arginine 20 is a binding site for ADP-alpha-D-glucose.

Belongs to the glycosyltransferase 1 family. Bacterial/plant glycogen synthase subfamily.

The catalysed reaction is [(1-&gt;4)-alpha-D-glucosyl](n) + ADP-alpha-D-glucose = [(1-&gt;4)-alpha-D-glucosyl](n+1) + ADP + H(+). Its pathway is glycan biosynthesis; glycogen biosynthesis. Functionally, synthesizes alpha-1,4-glucan chains using ADP-glucose. The chain is Glycogen synthase from Prosthecochloris aestuarii (strain DSM 271 / SK 413).